We begin with the raw amino-acid sequence, 396 residues long: Acetate kinase (396 aa).

A Mg(2+)-binding site is contributed by Asn8. Lys15 lines the ATP pocket. Substrate is bound at residue Arg89. Asp146 acts as the Proton donor/acceptor in catalysis. ATP is bound by residues His206 to Gly210, Asp283 to Arg285, and Gly331 to Asn335. Glu383 contributes to the Mg(2+) binding site.

It belongs to the acetokinase family. Homodimer. The cofactor is Mg(2+). Mn(2+) serves as cofactor.

The protein resides in the cytoplasm. It catalyses the reaction acetate + ATP = acetyl phosphate + ADP. It functions in the pathway metabolic intermediate biosynthesis; acetyl-CoA biosynthesis; acetyl-CoA from acetate: step 1/2. In terms of biological role, catalyzes the formation of acetyl phosphate from acetate and ATP. Can also catalyze the reverse reaction. The sequence is that of Acetate kinase from Streptococcus uberis (strain ATCC BAA-854 / 0140J).